The primary structure comprises 1001 residues: 2-oxoglutarate dehydrogenase E1 component (1001 aa).

It belongs to the alpha-ketoglutarate dehydrogenase family. As to quaternary structure, homodimer. Part of the 2-oxoglutarate dehydrogenase (OGDH) complex composed of E1 (2-oxoglutarate dehydrogenase), E2 (dihydrolipoamide succinyltransferase) and E3 (dihydrolipoamide dehydrogenase); the complex contains multiple copies of the three enzymatic components (E1, E2 and E3). Requires thiamine diphosphate as cofactor.

It catalyses the reaction N(6)-[(R)-lipoyl]-L-lysyl-[protein] + 2-oxoglutarate + H(+) = N(6)-[(R)-S(8)-succinyldihydrolipoyl]-L-lysyl-[protein] + CO2. Its function is as follows. E1 component of the 2-oxoglutarate dehydrogenase (OGDH) complex which catalyzes the decarboxylation of 2-oxoglutarate, the first step in the conversion of 2-oxoglutarate to succinyl-CoA and CO(2). This is 2-oxoglutarate dehydrogenase E1 component from Brucella anthropi (strain ATCC 49188 / DSM 6882 / CCUG 24695 / JCM 21032 / LMG 3331 / NBRC 15819 / NCTC 12168 / Alc 37) (Ochrobactrum anthropi).